A 105-amino-acid polypeptide reads, in one-letter code: Large ribosomal subunit protein bL21 (105 aa).

Belongs to the bacterial ribosomal protein bL21 family. As to quaternary structure, part of the 50S ribosomal subunit. Contacts protein L20.

Its function is as follows. This protein binds to 23S rRNA in the presence of protein L20. The sequence is that of Large ribosomal subunit protein bL21 from Dictyoglomus turgidum (strain DSM 6724 / Z-1310).